The sequence spans 778 residues: DNA topoisomerase 1 (778 aa).

Residues 1–141 (MNSSDEEDIA…ETPEEDQGYK (141 aa)) are disordered. The span at 17–26 (KSSSITSAST) shows a compositional bias: low complexity. Composition is skewed to basic and acidic residues over residues 71–83 (VKTE…EPKS) and 100–121 (EKTT…ESKT). The segment covering 122-131 (QSDSQASVKS) has biased composition (polar residues). Interaction with DNA regions lie at residues 367–368 (KY), 430–435 (RAGGEK), and 522–524 (TAK). Residues 374–778 (NSSVKGQSDF…IESADENWRF (405 aa)) enclose the Topo IB-type catalytic domain. Y736 (O-(3'-phospho-DNA)-tyrosine intermediate) is an active-site residue.

This sequence belongs to the type IB topoisomerase family.

It carries out the reaction ATP-independent breakage of single-stranded DNA, followed by passage and rejoining.. In terms of biological role, releases the supercoiling and torsional tension of DNA introduced during the DNA replication and transcription by transiently cleaving and rejoining one strand of the DNA duplex. Introduces a single-strand break via transesterification at a target site in duplex DNA. The scissile phosphodiester is attacked by the catalytic tyrosine of the enzyme, resulting in the formation of a DNA-(3'-phosphotyrosyl)-enzyme intermediate and the expulsion of a 5'-OH DNA strand. The free DNA strand then rotates around the intact phosphodiester bond on the opposing strand, thus removing DNA supercoils. Finally, in the religation step, the DNA 5'-OH attacks the covalent intermediate to expel the active-site tyrosine and restore the DNA phosphodiester backbone. In Candida albicans (Yeast), this protein is DNA topoisomerase 1 (TOP1).